The chain runs to 359 residues: MALTLEELVKRFGGEIAGDAQCKVGGLAPLDQAGPQQLAFLANPKYLSQVESTRAGAVLIAPKDLEKLGAAAAGRNFIVTPNPYAYFARVAQMFIDLATPPRAAGVHPSATIDPAATVAATAVIGPHVTIEAGAVIEDGVQLDANVFVGRGTTIGAGSHFYPNASVYHGCKIGPRAIVHAGAVIGSDGFGFAPDFVGDGDARTGSWVKIPQVGGVTIGPDVEIGANTTIDRGAMADTVIEECVKIDNQVQIGHNCRIGAYTVIAGSAGIAGSTTIGRHCMIGGAAGIAGHVTLGDYVIITAKSGVSKSLPKAGIYTSAFPAVDHGEWNKSAALVRNLDKLRERIKALEAALAAQGGTHA.

Histidine 253 (proton acceptor) is an active-site residue.

The protein belongs to the transferase hexapeptide repeat family. LpxD subfamily. As to quaternary structure, homotrimer.

It carries out the reaction a UDP-3-O-[(3R)-3-hydroxyacyl]-alpha-D-glucosamine + a (3R)-hydroxyacyl-[ACP] = a UDP-2-N,3-O-bis[(3R)-3-hydroxyacyl]-alpha-D-glucosamine + holo-[ACP] + H(+). Its pathway is bacterial outer membrane biogenesis; LPS lipid A biosynthesis. Catalyzes the N-acylation of UDP-3-O-acylglucosamine using 3-hydroxyacyl-ACP as the acyl donor. Is involved in the biosynthesis of lipid A, a phosphorylated glycolipid that anchors the lipopolysaccharide to the outer membrane of the cell. The sequence is that of UDP-3-O-acylglucosamine N-acyltransferase from Burkholderia cenocepacia (strain ATCC BAA-245 / DSM 16553 / LMG 16656 / NCTC 13227 / J2315 / CF5610) (Burkholderia cepacia (strain J2315)).